The sequence spans 134 residues: Natriuretic peptides B (134 aa).

The N-terminal stretch at 1-26 (MDPQTAPSRALLLLLFLHLAFLGGRS) is a signal peptide. Residue serine 41 is glycosylated (O-linked (Xyl...) (chondroitin sulfate) serine). An O-linked (HexNAc...) threonine; Partial glycan is attached at threonine 62. Serine 63 and serine 70 each carry an O-linked (HexNAc...) serine glycan. O-linked (HexNAc...) threonine glycosylation is present at threonine 74. A glycan (O-linked (HexNAc...) serine) is linked at serine 79. O-linked (HexNAc...) threonine; Partial glycosylation occurs at threonine 84. An O-linked (HexNAc...) threonine glycan is attached at threonine 97. Residues cysteine 112 and cysteine 128 are joined by a disulfide bond.

Belongs to the natriuretic peptide family. The precursor molecule is proteolytically cleaved by the endoproteases FURIN or CORIN at Arg-102 to produce brain natriuretic peptide 32 and NT-proBNP. This likely occurs after it has been secreted into the blood, either during circulation or in the target cells. CORIN also cleaves the precursor molecule at additional residues including Arg-99 and possibly Lys-105. In patients with heart failure, processing and degradation of natriuretic peptides B occurs but is delayed, possibly due to a decrease in enzyme level or activity of CORIN and DPP4. In terms of processing, undergoes further proteolytic cleavage by various proteases such as DPP4, MME and possibly FAP, to give rise to a variety of shorter peptides. Cleaved at Pro-104 by the prolyl endopeptidase FAP (seprase) activity (in vitro). Degraded by IDE. During IDE degradation, the resulting products initially increase the activation of NPR1 and can also stimulate NPR2 to produce cGMP before the fragments are completely degraded and inactivated by IDE (in vitro). Post-translationally, O-glycosylated on at least seven residues. In cardiomyocytes, glycosylation at Thr-97 is essential for the stability and processing of the extracellular natriuretic peptides B. Glycosylation, especially at Thr-97, may also be important for brain natriuretic peptide 32 stability and/or extracellular distribution. Glycosylation at Thr-97 appears to inhibit FURIN- or CORIN-mediated proteolytic processing, at least in HEK293 cells. Detected in the cardiac atria (at protein level). Detected in the kidney distal tubular cells (at protein level).

It is found in the secreted. In terms of biological role, cardiac hormone that plays a key role in mediating cardio-renal homeostasis. May also function as a paracrine antifibrotic factor in the heart. Acts by specifically binding and stimulating NPR1 to produce cGMP, which in turn activates effector proteins that drive various biological responses. Involved in regulating the extracellular fluid volume and maintaining the fluid-electrolyte balance through natriuresis, diuresis, vasorelaxation, and inhibition of renin and aldosterone secretion. Binds the clearance receptor NPR3. Functionally, may affect cardio-renal homeostasis. Able to promote the production of cGMP although its potency is very low compared to brain natriuretic peptide 32. Its function is as follows. May have a role in cardio-renal homeostasis. Able to promote the production of cGMP. The chain is Natriuretic peptides B (NPPB) from Homo sapiens (Human).